A 482-amino-acid chain; its full sequence is Mannan endo-1,4-beta-mannosidase (482 aa).

The N-terminal stretch at 1 to 21 (MARTLRYLLCGILALAAGSNA) is a signal peptide. Residues 42 to 160 (TTYEAEDAIL…WYLVDSITLT (119 aa)) enclose the CBM6 domain. N-linked (GlcNAc...) asparagine glycans are attached at residues Asn-171 and Asn-300. A GH26 domain is found at 181–474 (ASARALYDYL…YTSDYVLTLD (294 aa)). Catalysis depends on Glu-332, which acts as the Proton donor. Glu-422 acts as the Nucleophile in catalysis.

It belongs to the glycosyl hydrolase 26 family.

The protein resides in the secreted. With respect to regulation, the activity is completely impaired by Ag(+), partially inhibited by Zn(2+), and enhanced by Co(2+), Ni(2+) and Cu(2+) by 22.6, 14.5 and 20.8 %, respectively. Ca(2+), Na(+), Mg(2+), Mn(2+), urea and EDTA do not significantly affect the mannanase activity. Mannan endo-1,4-beta-mannosidase that exhibits high activity against konjac glucomannan and carob galactomannan, as well as a lower activity toward beta-mannan. Shows no activity against barley beta-glucan, birchwood xylan, and low viscosity carboxymethyl cellulose (CMC). Has the ability to hydrolyze manno-oligosaccharides such as M4 which is degraded slightly to M3 and M1, M5 which is mainly degraded to M4 and M1, and M6 which is mostly hydrolyzed to M4 and M2. Shows no activity toward M2 and M3 manno-oligosaccharides. The polypeptide is Mannan endo-1,4-beta-mannosidase (Thermothelomyces thermophilus (strain ATCC 42464 / BCRC 31852 / DSM 1799) (Sporotrichum thermophile)).